Here is a 457-residue protein sequence, read N- to C-terminus: Cysteine--tRNA ligase (457 aa).

Cysteine 27 contacts Zn(2+). The short motif at 29 to 39 (ITPQSEPHIGH) is the 'HIGH' region element. Residues cysteine 207, histidine 232, and glutamate 236 each contribute to the Zn(2+) site. The short motif at 265-269 (KMSKS) is the 'KMSKS' region element. Lysine 268 is a binding site for ATP.

This sequence belongs to the class-I aminoacyl-tRNA synthetase family. Monomer. Zn(2+) serves as cofactor.

The protein resides in the cytoplasm. It carries out the reaction tRNA(Cys) + L-cysteine + ATP = L-cysteinyl-tRNA(Cys) + AMP + diphosphate. This is Cysteine--tRNA ligase from Dehalococcoides mccartyi (strain ATCC BAA-2100 / JCM 16839 / KCTC 5957 / BAV1).